Here is a 147-residue protein sequence, read N- to C-terminus: Large ribosomal subunit protein uL15 (147 aa).

A disordered region spans residues 1-42 (MTIKVHHLRPAPGAKTAKTRVGRGEGSKGKTAGRGTKGSKAR).

Belongs to the universal ribosomal protein uL15 family. In terms of assembly, part of the 50S ribosomal subunit.

Its function is as follows. Binds to the 23S rRNA. This is Large ribosomal subunit protein uL15 from Salinispora arenicola (strain CNS-205).